A 367-amino-acid chain; its full sequence is Apurinic-apyrimidinic endonuclease 1 (367 aa).

Positions 83, 123, 158, 192, 195, 229, 242, 244, and 274 each coordinate Zn(2+). The tract at residues 312-367 (DTLQKLGAKSRKEQLDKFEVKQKKRAGGTKRKKATAEPSDNDILSQMTKKRKTKKE) is disordered. The segment covering 321 to 332 (SRKEQLDKFEVK) has biased composition (basic and acidic residues). Positions 333–344 (QKKRAGGTKRKK) are enriched in basic residues. S356 carries the post-translational modification Phosphoserine.

This sequence belongs to the AP endonuclease 2 family. As to quaternary structure, monomer. Zn(2+) is required as a cofactor.

The protein localises to the nucleus. Its function is as follows. DNA repair enzyme that cleaves apurinic/apyrimidinic (AP) sites and removes 3'-blocking groups present at single strand breaks of damaged DNA. APN1 accounts for &gt; 97% of both apurinic/apyrimidinic (AP) endonuclease and DNA 3'-repair diesterase activities. The polypeptide is Apurinic-apyrimidinic endonuclease 1 (APN1) (Saccharomyces cerevisiae (strain ATCC 204508 / S288c) (Baker's yeast)).